A 390-amino-acid polypeptide reads, in one-letter code: Probable purine permease 18 (390 aa).

The span at 1-14 shows a compositional bias: polar residues; it reads MEMTEASKQTTAEG. Residues 1–23 are disordered; that stretch reads MEMTEASKQTTAEGSANPEPDQI. The residue at position 25 (Ser25) is a Phosphoserine. Helical transmembrane passes span 39–59, 81–101, 120–140, 148–168, 176–196, 211–231, 250–270, 297–317, 324–344, and 348–368; these read ISVS…MLLL, WLQA…FFIF, LILL…LFAL, GVFT…AAII, WIIL…PEFG, WLTF…QLCF, VIEM…VGLF, IGLA…VLYV, VVHM…FDFM, and FSWP…SYFY.

It belongs to the purine permeases (TC 2.A.7.14) family.

It localises to the membrane. The protein is Probable purine permease 18 (PUP18) of Arabidopsis thaliana (Mouse-ear cress).